We begin with the raw amino-acid sequence, 375 residues long: Alcohol dehydrogenase 1 (375 aa).

Residue Ser2 is modified to N-acetylserine. Zn(2+) is bound by residues Cys47, His68, Cys98, Cys101, Cys104, Cys112, and Cys175. NAD(+) contacts are provided by residues 200 to 205, Asp224, Lys229, 293 to 295, and Arg370; these read GLGGVG and LGV.

It belongs to the zinc-containing alcohol dehydrogenase family. Class-I subfamily. As to quaternary structure, homodimer. Requires Zn(2+) as cofactor.

Its subcellular location is the cytoplasm. The catalysed reaction is a primary alcohol + NAD(+) = an aldehyde + NADH + H(+). It catalyses the reaction a secondary alcohol + NAD(+) = a ketone + NADH + H(+). The protein is Alcohol dehydrogenase 1 (ADH1) of Apteryx australis (Southern brown kiwi).